We begin with the raw amino-acid sequence, 358 residues long: Uroporphyrinogen decarboxylase (358 aa).

Substrate contacts are provided by residues 36–40, Asp-85, Tyr-160, Ser-215, and His-338; that span reads RQAGR.

Belongs to the uroporphyrinogen decarboxylase family. In terms of assembly, homodimer.

Its subcellular location is the cytoplasm. It carries out the reaction uroporphyrinogen III + 4 H(+) = coproporphyrinogen III + 4 CO2. It functions in the pathway porphyrin-containing compound metabolism; protoporphyrin-IX biosynthesis; coproporphyrinogen-III from 5-aminolevulinate: step 4/4. Functionally, catalyzes the decarboxylation of four acetate groups of uroporphyrinogen-III to yield coproporphyrinogen-III. This chain is Uroporphyrinogen decarboxylase, found in Corynebacterium glutamicum (strain R).